A 78-amino-acid chain; its full sequence is Conotoxin Cl14.9 (78 aa).

A signal peptide spans 1–22; sequence MTAKATLLVLALVVMATSGVSS. A propeptide spanning residues 23–47 is cleaved from the precursor; that stretch reads ASVAGGPVVNSDTVSRSDPERLSTR. Isoleucine amide is present on isoleucine 70. Residues 74-78 constitute a propeptide that is removed on maturation; that stretch reads DITQQ.

Contains 2 disulfide bonds. As to expression, expressed by the venom duct.

The protein localises to the secreted. In Californiconus californicus (California cone), this protein is Conotoxin Cl14.9.